The following is a 488-amino-acid chain: Glutamyl-tRNA(Gln) amidotransferase subunit B, mitochondrial (488 aa).

The protein belongs to the GatB/GatE family. GatB subfamily. Subunit of the heterotrimeric GatFAB amidotransferase (AdT) complex, composed of A, B and F subunits.

The protein resides in the mitochondrion. It catalyses the reaction L-glutamyl-tRNA(Gln) + L-glutamine + ATP + H2O = L-glutaminyl-tRNA(Gln) + L-glutamate + ADP + phosphate + H(+). Its function is as follows. Allows the formation of correctly charged Gln-tRNA(Gln) through the transamidation of misacylated Glu-tRNA(Gln) in the mitochondria. The reaction takes place in the presence of glutamine and ATP through an activated gamma-phospho-Glu-tRNA(Gln). In Candida albicans (strain SC5314 / ATCC MYA-2876) (Yeast), this protein is Glutamyl-tRNA(Gln) amidotransferase subunit B, mitochondrial.